The following is a 278-amino-acid chain: Orotidine 5'-phosphate decarboxylase (278 aa).

The active-site Proton donor is the K95.

It belongs to the OMP decarboxylase family. Type 2 subfamily.

It carries out the reaction orotidine 5'-phosphate + H(+) = UMP + CO2. Its pathway is pyrimidine metabolism; UMP biosynthesis via de novo pathway; UMP from orotate: step 2/2. The polypeptide is Orotidine 5'-phosphate decarboxylase (Mycobacterium marinum (strain ATCC BAA-535 / M)).